Here is a 131-residue protein sequence, read N- to C-terminus: UPF0146 protein PYRAB01940 (131 aa).

Belongs to the UPF0146 family.

The protein is UPF0146 protein PYRAB01940 of Pyrococcus abyssi (strain GE5 / Orsay).